The primary structure comprises 515 residues: Zinc-binding protein AdcA (515 aa).

The N-terminal stretch at 1–28 is a signal peptide; that stretch reads MKKKILLMMSLISVFFAWQLTQAKQVLA. Position 66 (His-66) interacts with Zn(2+). Residues 125 to 148 are disordered; sequence DHHHEDADKKHEHNKHSEEGHNHA. The interval 129 to 148 is his-rich loop; sequence EDADKKHEHNKHSEEGHNHA. His-152, His-216, and Glu-291 together coordinate Zn(2+).

The protein belongs to the bacterial solute-binding protein 9 family.

In terms of biological role, part of the ATP-binding cassette (ABC) transport system AdcABC involved in zinc import. Binds zinc with high affinity and specificity and delivers it to the membrane permease for translocation into the cytoplasm. In Streptococcus pyogenes serotype M18 (strain MGAS8232), this protein is Zinc-binding protein AdcA (adcA).